The chain runs to 156 residues: Ribosome-binding factor A (156 aa).

The disordered stretch occupies residues 124–156; it reads TRAEYAGEAQPYRLEEEPEGSGDEVPPPGGDQR.

Belongs to the RbfA family. Monomer. Binds 30S ribosomal subunits, but not 50S ribosomal subunits or 70S ribosomes.

The protein localises to the cytoplasm. Its function is as follows. One of several proteins that assist in the late maturation steps of the functional core of the 30S ribosomal subunit. Associates with free 30S ribosomal subunits (but not with 30S subunits that are part of 70S ribosomes or polysomes). Required for efficient processing of 16S rRNA. May interact with the 5'-terminal helix region of 16S rRNA. This chain is Ribosome-binding factor A, found in Salinispora tropica (strain ATCC BAA-916 / DSM 44818 / JCM 13857 / NBRC 105044 / CNB-440).